A 2173-amino-acid polypeptide reads, in one-letter code: Mediator of RNA polymerase II transcription subunit 12 (2173 aa).

8 disordered regions span residues 1 to 34, 318 to 345, 630 to 718, 784 to 804, 1380 to 1404, 1443 to 1467, 1737 to 1780, and 2020 to 2068; these read MAAF…QKED, GGHQ…AGGN, ASNS…KGMD, KSTA…KPEA, MNSS…NSAS, ELEK…KSMS, EEEP…VKQE, and QGIH…FRPQ. Residues 702–717 are compositionally biased toward basic and acidic residues; the sequence is QAQEQESKSTAKDKGM. Low complexity predominate over residues 1389-1404; that stretch reads GSAVSGSSVSNSNSAS. 2 stretches are compositionally biased toward basic and acidic residues: residues 1443–1462 and 1747–1759; these read ELEK…DRQK and EPDK…KVEK. The segment covering 2034–2057 has biased composition (low complexity); sequence QQQQQQQQQQQQQQQQQQVHQQQQ.

The protein belongs to the Mediator complex subunit 12 family. As to quaternary structure, component of the Mediator complex.

The protein localises to the nucleus. Functionally, component of the Mediator complex, a coactivator involved in regulated gene transcription of nearly all RNA polymerase II-dependent genes. Mediator functions as a bridge to convey information from gene-specific regulatory proteins to the basal RNA polymerase II transcription machinery. Mediator is recruited to promoters by direct interactions with regulatory proteins and serves as a scaffold for the assembly of a functional preinitiation complex with RNA polymerase II and the general transcription factors. Required for development of the body axis, brain, ear, kidney, forelimb and neural crest and for pigmentation. Acts as a coactivator for sox9a and/or sox9b promoting the expression of several neuronal determination genes. The chain is Mediator of RNA polymerase II transcription subunit 12 (med12) from Danio rerio (Zebrafish).